A 418-amino-acid chain; its full sequence is UDP-N-acetylglucosamine 1-carboxyvinyltransferase (418 aa).

Residue 22–23 (KN) participates in phosphoenolpyruvate binding. R93 is a UDP-N-acetyl-alpha-D-glucosamine binding site. C117 (proton donor) is an active-site residue. The residue at position 117 (C117) is a 2-(S-cysteinyl)pyruvic acid O-phosphothioketal. Residues D305 and V327 each contribute to the UDP-N-acetyl-alpha-D-glucosamine site.

Belongs to the EPSP synthase family. MurA subfamily.

It localises to the cytoplasm. The catalysed reaction is phosphoenolpyruvate + UDP-N-acetyl-alpha-D-glucosamine = UDP-N-acetyl-3-O-(1-carboxyvinyl)-alpha-D-glucosamine + phosphate. Its pathway is cell wall biogenesis; peptidoglycan biosynthesis. Functionally, cell wall formation. Adds enolpyruvyl to UDP-N-acetylglucosamine. The polypeptide is UDP-N-acetylglucosamine 1-carboxyvinyltransferase (Halorhodospira halophila (strain DSM 244 / SL1) (Ectothiorhodospira halophila (strain DSM 244 / SL1))).